Reading from the N-terminus, the 164-residue chain is FMN reductase (NADH) RutF (164 aa).

The protein belongs to the non-flavoprotein flavin reductase family. RutF subfamily.

It catalyses the reaction FMNH2 + NAD(+) = FMN + NADH + 2 H(+). Catalyzes the reduction of FMN to FMNH2 which is used to reduce pyrimidine by RutA via the Rut pathway. The protein is FMN reductase (NADH) RutF of Escherichia coli O127:H6 (strain E2348/69 / EPEC).